A 401-amino-acid polypeptide reads, in one-letter code: UPF0242 protein CCA_01002 (401 aa).

Belongs to the UPF0242 family.

The polypeptide is UPF0242 protein CCA_01002 (Chlamydia caviae (strain ATCC VR-813 / DSM 19441 / 03DC25 / GPIC) (Chlamydophila caviae)).